A 577-amino-acid polypeptide reads, in one-letter code: Insulin-like growth factor 2 mRNA-binding protein 1 (577 aa).

RRM domains are found at residues 2–75 and 81–156; these read NKLY…HSVP and RKIQ…YIPD. A phosphoserine mark is found at serine 12 and serine 73. The segment at 156–190 is disordered; that stretch reads DEQITQGPENGRRGGFGSRGQPRQGSPVAAGAPAK. Phosphoserine; by MTOR is present on serine 181. 4 KH domains span residues 195-260, 276-343, 405-470, and 487-553; these read DIPL…CKMI, EVPL…EQEI, QEMV…QGRI, and KLET…QRKI. Residues 312-323 are sufficient for nuclear export; sequence ISSLQDLTLYNP. The tract at residues 485 to 495 is sufficient for nuclear export; that stretch reads EVKLETHIRVP. Threonine 528 bears the Phosphothreonine mark.

It belongs to the RRM IMP/VICKZ family. Can form homodimers and heterodimers with IGF2BP1 and IGF2BP3. Component of the coding region determinant (CRD)-mediated complex, composed of DHX9, HNRNPU, IGF2BP1, SYNCRIP and YBX1. Identified in a mRNP complex, at least composed of DHX9, DDX3X, ELAVL1, HNRNPU, IGF2BP1, ILF3, PABPC1, PCBP2, PTBP2, STAU1, STAU2, SYNCRIP and YBX1. Associates with mRNP complex. Interacts with FMR1. Component of a multisubunit autoregulatory RNP complex (ARC), at least composed of IGF2BP1, PABPC1 and CSDE1. Interacts with AGO1 and AGO2. Interacts, through domains KH3 and KH4, with PABPC1 in an RNA-independent manner. Component of a TAU mRNP complex, at least composed of IGF2BP1, ELAVL4 and G3BP. Interacts with ELAVL4 in an RNA-dependent manner. Associates with microtubules and polysomes. Interacts with ELAVL1 and MATR3. Phosphorylated at Ser-181 by mTORC2 cotranslationally, promoting binding to the 3'-UTR of IGF2 mRNA. In terms of tissue distribution, expressed in zygotes and blastocysts (at protein level). Expressed in brain, skeletal muscle, trophoblasts of placenta, oocytes and spermatogonia (at protein level). Expressed in testis and ovary. Following colon injury, expressed in the wound bed mesenchyme during the first phase of repair, probably by colonic mesenchymal stem cells (at protein level).

The protein localises to the nucleus. The protein resides in the cytoplasm. It localises to the perinuclear region. It is found in the P-body. Its subcellular location is the stress granule. The protein localises to the cell projection. The protein resides in the lamellipodium. It localises to the dendrite. It is found in the dendritic spine. Its subcellular location is the growth cone. The protein localises to the filopodium. The protein resides in the axon. In terms of biological role, RNA-binding factor that recruits target transcripts to cytoplasmic protein-RNA complexes (mRNPs). This transcript 'caging' into mRNPs allows mRNA transport and transient storage. It also modulates the rate and location at which target transcripts encounter the translational apparatus and shields them from endonuclease attacks or microRNA-mediated degradation. Preferentially binds to N6-methyladenosine (m6A)-containing mRNAs and increases their stability. Regulates localized beta-actin/ACTB mRNA translation, a crucial process for cell polarity, cell migration and neurite outgrowth. Co-transcriptionally associates with the ACTB mRNA in the nucleus. This binding involves a conserved 54-nucleotide element in the ACTB mRNA 3'-UTR, known as the 'zipcode'. The RNP thus formed is exported to the cytoplasm, binds to a motor protein and is transported along the cytoskeleton to the cell periphery. During transport, prevents ACTB mRNA from being translated into protein. When the RNP complex reaches its destination near the plasma membrane, IGF2BP1 is phosphorylated. This releases the mRNA, allowing ribosomal 40S and 60S subunits to assemble and initiate ACTB protein synthesis. Monomeric ACTB then assembles into the subcortical actin cytoskeleton. During neuronal development, key regulator of neurite outgrowth, growth cone guidance and neuronal cell migration, presumably through the spatiotemporal fine tuning of protein synthesis, such as that of ACTB. May regulate mRNA transport to activated synapses. Binds to the 3'-UTR of CD44 mRNA and stabilizes it, hence promotes cell adhesion and invadopodia formation in cancer cells. Binds to the oncofetal H19 transcript and regulates its localization. Binds to and stabilizes BTRC/FBW1A mRNA. Binds to the adenine-rich autoregulatory sequence (ARS) located in PABPC1 mRNA and represses its translation. PABPC1 mRNA-binding is stimulated by PABPC1 protein. Prevents BTRC/FBW1A mRNA degradation by disrupting microRNA-dependent interaction with AGO2. During cellular stress, such as oxidative stress or heat shock, stabilizes target mRNAs that are recruited to stress granules, including CD44, IGF2, MAPK4, MYC, PTEN, RAPGEF2 and RPS6KA5 transcripts. Interacts with GAP43 transcript and transports it to axons. Binds to the 3'-UTR of IGF2 mRNA by a mechanism of cooperative and sequential dimerization and regulates IGF2 mRNA subcellular localization and translation. Binds to MYC mRNA, in the coding region instability determinant (CRD) of the open reading frame (ORF), hence prevents MYC cleavage by endonucleases and possibly microRNA targeting to MYC-CRD. Binding to MYC mRNA is enhanced by m6A-modification of the CRD. Binds to and stabilizes ABCB1/MDR-1 mRNA. Binds to the neuron-specific TAU mRNA and regulates its localization. Plays a direct role in the transport and translation of transcripts required for axonal regeneration in adult sensory neurons. During interstinal wound repair, interacts with and stabilizes PTGS2 transcript. PTGS2 mRNA stabilization may be crucial for colonic mucosal wound healing. This is Insulin-like growth factor 2 mRNA-binding protein 1 (Igf2bp1) from Mus musculus (Mouse).